Reading from the N-terminus, the 332-residue chain is Abscisic acid-inducible protein kinase (332 aa).

Residues G1–A8 and K23 each bind ATP. One can recognise a Protein kinase domain in the interval G1–F250. The active-site Proton acceptor is the D113.

Belongs to the protein kinase superfamily. Ser/Thr protein kinase family. Post-translationally, autophosphorylated.

The enzyme catalyses L-seryl-[protein] + ATP = O-phospho-L-seryl-[protein] + ADP + H(+). It catalyses the reaction L-threonyl-[protein] + ATP = O-phospho-L-threonyl-[protein] + ADP + H(+). Functionally, involved in water-stress responses. The protein is Abscisic acid-inducible protein kinase of Triticum aestivum (Wheat).